Consider the following 285-residue polypeptide: Cell division protein ZipA (285 aa).

A topological domain (periplasmic) is located at residue Met1. Residues 2 to 22 (EIGLREWLIVIGIVVIGGILF) traverse the membrane as a helical segment. The Cytoplasmic segment spans residues 23–285 (DGWRRMRGSK…FERRQLTHKR (263 aa)). The segment at 49–88 (AVSENSELLGPSRSVDFPQGAGFEPDEENLPSLSVRGPSR) is disordered.

The protein belongs to the ZipA family. As to quaternary structure, interacts with FtsZ via their C-terminal domains.

The protein resides in the cell inner membrane. In terms of biological role, essential cell division protein that stabilizes the FtsZ protofilaments by cross-linking them and that serves as a cytoplasmic membrane anchor for the Z ring. Also required for the recruitment to the septal ring of downstream cell division proteins. The protein is Cell division protein ZipA of Azotobacter vinelandii (strain DJ / ATCC BAA-1303).